We begin with the raw amino-acid sequence, 559 residues long: DNA ligase (559 aa).

Glu247 contacts ATP. The N6-AMP-lysine intermediate role is filled by Lys249. ATP is bound by residues Arg254, Arg269, Glu299, Phe339, Arg414, and Lys420.

The protein belongs to the ATP-dependent DNA ligase family. Mg(2+) serves as cofactor.

It catalyses the reaction ATP + (deoxyribonucleotide)n-3'-hydroxyl + 5'-phospho-(deoxyribonucleotide)m = (deoxyribonucleotide)n+m + AMP + diphosphate.. In terms of biological role, DNA ligase that seals nicks in double-stranded DNA during DNA replication, DNA recombination and DNA repair. The chain is DNA ligase from Pyrococcus abyssi.